The following is a 224-amino-acid chain: Cytidylate kinase (224 aa).

ATP is bound at residue 11-19; it reads GPAAAGKST.

Belongs to the cytidylate kinase family. Type 1 subfamily.

It localises to the cytoplasm. The enzyme catalyses CMP + ATP = CDP + ADP. The catalysed reaction is dCMP + ATP = dCDP + ADP. In Geobacillus sp. (strain WCH70), this protein is Cytidylate kinase.